Here is a 117-residue protein sequence, read N- to C-terminus: Pterin-4-alpha-carbinolamine dehydratase 2 (117 aa).

Lys-101, Lys-105, and Lys-112 each carry N6-acetyllysine; alternate. N6-succinyllysine; alternate is present on residues Lys-101, Lys-105, and Lys-112.

Belongs to the pterin-4-alpha-carbinolamine dehydratase family. Homotetramer. Interacts with DYRK1B.

The enzyme catalyses (4aS,6R)-4a-hydroxy-L-erythro-5,6,7,8-tetrahydrobiopterin = (6R)-L-erythro-6,7-dihydrobiopterin + H2O. Functionally, involved in tetrahydrobiopterin biosynthesis. Seems to both prevent the formation of 7-pterins and accelerate the formation of quinonoid-BH2. Regulates the dimerization of homeodomain protein HNF-1-alpha and enhances its transcriptional activity. This chain is Pterin-4-alpha-carbinolamine dehydratase 2 (PCBD2), found in Pongo abelii (Sumatran orangutan).